The primary structure comprises 133 residues: MSRDFSREKRLLTPRHFKAVFDSPTGKVPGKNLLLLARNNDLDHPRLGLVIGKKSVKLSVERNRLKRLMRESFRQHQDSLVGWDIVIVARKGLGDVENPELIQYFGKLWKRLARSRPIPEEKSEPAGVDSPDA.

The protein belongs to the RnpA family. In terms of assembly, consists of a catalytic RNA component (M1 or rnpB) and a protein subunit.

The catalysed reaction is Endonucleolytic cleavage of RNA, removing 5'-extranucleotides from tRNA precursor.. Functionally, RNaseP catalyzes the removal of the 5'-leader sequence from pre-tRNA to produce the mature 5'-terminus. It can also cleave other RNA substrates such as 4.5S RNA. The protein component plays an auxiliary but essential role in vivo by binding to the 5'-leader sequence and broadening the substrate specificity of the ribozyme. In Pseudomonas savastanoi pv. phaseolicola (strain 1448A / Race 6) (Pseudomonas syringae pv. phaseolicola (strain 1448A / Race 6)), this protein is Ribonuclease P protein component.